Here is a 205-residue protein sequence, read N- to C-terminus: Mediator of RNA polymerase II transcription subunit 29 (205 aa).

Low complexity predominate over residues 1–27 (MNPNMNMMQMSGPPMMQVSPMMQSSPQ). The tract at residues 1 to 65 (MNPNMNMMQM…QQQQQQAEKL (65 aa)) is disordered. Positions 28 to 38 (PMMPTGPPGPV) are enriched in pro residues. Residues 39–61 (PMQQQHQQQQQQQQQQQQQQQQQ) show a composition bias toward low complexity.

It belongs to the Mediator complex subunit 29 family. Component of the Mediator complex.

The protein resides in the nucleus. Component of the Mediator complex, a coactivator involved in the regulated transcription of nearly all RNA polymerase II-dependent genes. Mediator functions as a bridge to convey information from gene-specific regulatory proteins to the basal RNA polymerase II transcription machinery. Mediator is recruited to promoters by direct interactions with regulatory proteins and serves as a scaffold for the assembly of a functional preinitiation complex with RNA polymerase II and the general transcription factors. The polypeptide is Mediator of RNA polymerase II transcription subunit 29 (ix) (Drosophila virilis (Fruit fly)).